A 141-amino-acid polypeptide reads, in one-letter code: ATP synthase epsilon chain (141 aa).

It belongs to the ATPase epsilon chain family. As to quaternary structure, F-type ATPases have 2 components, CF(1) - the catalytic core - and CF(0) - the membrane proton channel. CF(1) has five subunits: alpha(3), beta(3), gamma(1), delta(1), epsilon(1). CF(0) has three main subunits: a, b and c.

Its subcellular location is the cell inner membrane. Its function is as follows. Produces ATP from ADP in the presence of a proton gradient across the membrane. The protein is ATP synthase epsilon chain of Desulfatibacillum aliphaticivorans.